A 562-amino-acid chain; its full sequence is NAD-dependent malic enzyme (562 aa).

Y101 functions as the Proton donor in the catalytic mechanism. An NAD(+)-binding site is contributed by R154. The active-site Proton acceptor is the K172. Residues E243, D244, and D267 each coordinate a divalent metal cation. 2 residues coordinate NAD(+): D267 and N415.

Belongs to the malic enzymes family. In terms of assembly, homotetramer. It depends on Mg(2+) as a cofactor. Mn(2+) serves as cofactor.

It carries out the reaction (S)-malate + NAD(+) = pyruvate + CO2 + NADH. It catalyses the reaction oxaloacetate + H(+) = pyruvate + CO2. The polypeptide is NAD-dependent malic enzyme (Shewanella baltica (strain OS155 / ATCC BAA-1091)).